The sequence spans 459 residues: uncharacterized protein (459 aa).

Residues 5–63 (PVEEGQKFPLTIRRMGINGEGIGYFKKAVVFVPGAITGEEVVVEAVKVRDRFTEAKLNK) enclose the TRAM domain. [4Fe-4S] cluster-binding residues include Cys-76, Cys-82, Cys-85, and Cys-166. Residues Gln-290, Tyr-319, Asp-340, and Asp-388 each coordinate S-adenosyl-L-methionine. The Nucleophile role is filled by Cys-415.

Belongs to the class I-like SAM-binding methyltransferase superfamily. RNA M5U methyltransferase family.

This is an uncharacterized protein from Listeria monocytogenes serovar 1/2a (strain ATCC BAA-679 / EGD-e).